The sequence spans 423 residues: Histone acetyltransferase type B subunit 2 (423 aa).

WD repeat units lie at residues 138-174 (PHIEEVIRARYMPANSNIIATINGKGTISIFDRTLEE), 175-224 (SKAQ…KPKS), 228-268 (SHDD…EPVK), 271-311 (PTAS…SPLH), and 315-355 (GHQD…AEQS). An interaction with the histone H4 N-terminus region spans residues 357–361 (DDADD). One copy of the WD 6 repeat lies at 372–412 (GHRSPVNEFSFNPQIPWLLASTEEDNVIQAWKVSMKLVNAS).

This sequence belongs to the WD repeat RBAP46/RBAP48/MSI1 family. Component of the HAT-B complex composed of at least HAT1 and HAT2. The HAT-B complex binds to histone H4 tail.

Its subcellular location is the cytoplasm. It localises to the nucleus. Regulatory subunit of the histone acetylase B (HAT-B) complex. The complex acetylates 'Lys-12' of histone H4 which is required for telomeric silencing. In Eremothecium gossypii (strain ATCC 10895 / CBS 109.51 / FGSC 9923 / NRRL Y-1056) (Yeast), this protein is Histone acetyltransferase type B subunit 2 (HAT2).